A 516-amino-acid polypeptide reads, in one-letter code: 2-isopropylmalate synthase (516 aa).

In terms of domain architecture, Pyruvate carboxyltransferase spans 5–267 (VIIFDTTLRD…STNIVHKEIY (263 aa)). Mn(2+) contacts are provided by D14, H202, H204, and N238. The regulatory domain stretch occupies residues 392–516 (YLKFFSVQSI…NKKLKNLKKY (125 aa)).

It belongs to the alpha-IPM synthase/homocitrate synthase family. LeuA type 1 subfamily. As to quaternary structure, homodimer. Requires Mn(2+) as cofactor.

The protein resides in the cytoplasm. It catalyses the reaction 3-methyl-2-oxobutanoate + acetyl-CoA + H2O = (2S)-2-isopropylmalate + CoA + H(+). It participates in amino-acid biosynthesis; L-leucine biosynthesis; L-leucine from 3-methyl-2-oxobutanoate: step 1/4. In terms of biological role, catalyzes the condensation of the acetyl group of acetyl-CoA with 3-methyl-2-oxobutanoate (2-ketoisovalerate) to form 3-carboxy-3-hydroxy-4-methylpentanoate (2-isopropylmalate). The chain is 2-isopropylmalate synthase from Buchnera aphidicola subsp. Diuraphis noxia.